A 1185-amino-acid chain; its full sequence is Adhesion G-protein coupled receptor G6 (1185 aa).

The first 32 residues, 1–32 (MISFISGRWWRWKFQNTLAVFLLLICLSTSVA), serve as a signal peptide directing secretion. The Extracellular segment spans residues 33–849 (QSCQSSTSCN…AELIDEKNNR (817 aa)). Cysteine 41 and cysteine 67 are joined by a disulfide. The CUB domain occupies 41–149 (CNVVLTDSQG…KGFHISYKQV (109 aa)). The segment at 41-354 (CNVVLTDSQG…SSTQTDSTLS (314 aa)) is mediates interaction with type IV collagen. The tract at residues 41–839 (CNVVLTDSQG…FGILMDVSRA (799 aa)) is inhibits receptor signaling in absence of type IV collagen. N-linked (GlcNAc...) asparagine glycosylation occurs at asparagine 68. Ca(2+)-binding residues include glutamate 89 and aspartate 97. Cysteine 94 and cysteine 111 are oxidised to a cystine. Asparagine 121 is a glycosylation site (N-linked (GlcNAc...) asparagine). Residues aspartate 134, serine 136, and valine 137 each contribute to the Ca(2+) site. The Pentraxin (PTX) domain maps to 154–355 (RNQKVTMPKS…STQTDSTLSC (202 aa)). Disulfide bonds link cysteine 185/cysteine 248, cysteine 229/cysteine 271, and cysteine 369/cysteine 375. N-linked (GlcNAc...) asparagine glycosylation is found at asparagine 395, asparagine 429, asparagine 470, asparagine 539, asparagine 550, asparagine 562, asparagine 565, asparagine 613, asparagine 680, asparagine 691, asparagine 719, asparagine 763, asparagine 799, and asparagine 818. 2 cysteine pairs are disulfide-bonded: cysteine 508–cysteine 544 and cysteine 532–cysteine 563. Residues 658 to 840 (PSLTISSKNL…GILMDVSRAA (183 aa)) form the GAIN-B domain. 2 cysteine pairs are disulfide-bonded: cysteine 790-cysteine 822 and cysteine 809-cysteine 824. The tract at residues 790–840 (CVFWDFNLQNYSGGCNSDGCKVGSDSNSNRTVCLCNHLTHFGILMDVSRAA) is GPS. The stachel stretch occupies residues 829 to 837 (HFGILMDVS). Residues 850–870 (VLTFITYIGCGISAIFSAATL) traverse the membrane as a helical segment. Residues 871–886 (LTYIAFEKLRRDYPSK) lie on the Cytoplasmic side of the membrane. Residues 887–907 (ILMNLSTSLLFLNMVFLLDGW) traverse the membrane as a helical segment. Residues 908 to 915 (LASYEIKE) are Extracellular-facing. The helical transmembrane segment at 916–936 (LCVTVAVFLHFFLLTSFTWMG) threads the bilayer. Over 937–957 (LESIHMYIALVKVFNTYIRRY) the chain is Cytoplasmic. A helical transmembrane segment spans residues 958 to 978 (ILKFCIVGWGVPAAIVGIVLA). Residues 979–1013 (VSKDSYGKNYYGKGKDGQGTSEFCWILNPVVFYVT) lie on the Extracellular side of the membrane. A helical membrane pass occupies residues 1014-1034 (CVAYFSIIFLMNVAMFIVVMI). The Cytoplasmic segment spans residues 1035–1057 (QICGRNGKRSNRTLREDILRNLR). Residues 1058 to 1080 (SVVSLTFLLGMTWGFAFFAWGPV) traverse the membrane as a helical segment. Topologically, residues 1081–1083 (SLA) are extracellular. A helical membrane pass occupies residues 1084-1106 (FMYLFTIFNSLQGLFIFVFHCAL). Asparagine 1092 contacts 17alpha-hydroxyprogesterone. Residues 1107-1185 (KENVQKQWRR…RHSNADSTLQ (79 aa)) lie on the Cytoplasmic side of the membrane. Residues 1138 to 1160 (NTKKVSSDNLGKSLSSSSFGSTT) form a disordered region. The span at 1144 to 1158 (SDNLGKSLSSSSFGS) shows a compositional bias: low complexity.

The protein belongs to the G-protein coupled receptor 2 family. Adhesion G-protein coupled receptor (ADGR) subfamily. Autoproteolytically processed at the GPS region of the GAIN-B domain; this cleavage modulates receptor activity. In terms of tissue distribution, expressed in Schwann cells of the posterior lateral line nerve and in brain.

The protein resides in the cell membrane. Forms a heterodimer of 2 chains generated by proteolytic processing that remain associated through non-covalent interactions mediated by the GAIN-B domain. In the inactivated receptor, the Stachel sequence (also named stalk) is embedded in the GAIN-B domain, where it adopts a beta-strand conformation. On activation, the Stachel moves into the 7 transmembrane region and adopts a twisted hook-shaped configuration that forms contacts within the receptor, leading to coupling of a G-alpha protein, which activates signaling. The cleaved GAIN-B and N-terminal domains can then dissociate from the rest of the receptor. Adhesion G-protein coupled receptor (aGPCR) for steroid hormones, such as progesterone and 17alpha-hydroxyprogesterone (17OHP). Ligand binding causes a conformation change that triggers signaling via guanine nucleotide-binding proteins (G proteins) and modulates the activity of downstream effectors, such as adenylate cyclase. Adgrg6 is coupled to G(i) G alpha proteins and mediates inhibition of adenylate cyclase. Also able to couple to G(q) G proteins. Involved in myelination of the peripheral nervous system: required for differentiation of promyelinating Schwann cells and for normal myelination of axons. G-protein coupled receptor activity can also be activated by type IV collagen, a major constituent of the basement membrane. Also plays a role inner ear development. This chain is Adhesion G-protein coupled receptor G6 (adgrg6), found in Danio rerio (Zebrafish).